A 507-amino-acid polypeptide reads, in one-letter code: Cystathionine beta-synthase (507 aa).

An N6-(pyridoxal phosphate)lysine modification is found at Lys-53. Residue Asn-84 coordinates pyridoxal 5'-phosphate. Residue Ser-134 is modified to Phosphoserine. Residues 196-200 and Ser-289 contribute to the pyridoxal 5'-phosphate site; that span reads GTGGT. A phosphoserine mark is found at Ser-350 and Ser-424. The region spanning 373 to 432 is the CBS domain; the sequence is HLKPVVSVKETAKVTDVIKILKDNGFDQLPVLTEDGKLSGLVTLSELLRKLSINNSNNDN.

Belongs to the cysteine synthase/cystathionine beta-synthase family. Pyridoxal 5'-phosphate serves as cofactor.

It catalyses the reaction L-homocysteine + L-serine = L,L-cystathionine + H2O. The protein operates within amino-acid biosynthesis; L-cysteine biosynthesis; L-cysteine from L-homocysteine and L-serine: step 1/2. In Saccharomyces cerevisiae (strain ATCC 204508 / S288c) (Baker's yeast), this protein is Cystathionine beta-synthase (CYS4).